We begin with the raw amino-acid sequence, 67 residues long: Small ribosomal subunit protein bS21 (67 aa).

This sequence belongs to the bacterial ribosomal protein bS21 family.

The sequence is that of Small ribosomal subunit protein bS21 from Granulibacter bethesdensis (strain ATCC BAA-1260 / CGDNIH1).